Reading from the N-terminus, the 51-residue chain is MGGRFSGRVGIEKGGHPPSAADHSAGHLGPVCRFFRHPVITTRFNIKVMKG.

The segment at 1–24 (MGGRFSGRVGIEKGGHPPSAADHS) is disordered.

This is an uncharacterized protein from Escherichia coli.